We begin with the raw amino-acid sequence, 910 residues long: ZZ-type zinc finger-containing protein 3 (910 aa).

Disordered stretches follow at residues 41-117 (AHPE…RQAE) and 133-153 (EATN…PGEH). Polar residues predominate over residues 67–84 (QKGTNNGRTSDVRQQSAR). Phosphoserine is present on residues S89, S96, S137, S138, and S142. Residues 96–116 (SSSEKDDLERQALESCERRQA) are compositionally biased toward basic and acidic residues. Basic and acidic residues predominate over residues 142 to 153 (SPVKPDKEPGEH). K283 is covalently cross-linked (Glycyl lysine isopeptide (Lys-Gly) (interchain with G-Cter in SUMO2)). 3 disordered regions span residues 303–358 (TAES…VSGE), 373–444 (TSLS…PQDG), and 609–641 (ARPK…SHNR). 2 stretches are compositionally biased toward polar residues: residues 331–347 (SSAS…NPLD) and 397–434 (SSPT…SESP). An N6-acetyllysine modification is found at K401. Residue S613 is modified to Phosphoserine. Residues 613–622 (SPLDPKKDGE) are compositionally biased toward basic and acidic residues. K654 participates in a covalent cross-link: Glycyl lysine isopeptide (Lys-Gly) (interchain with G-Cter in SUMO2). The HTH myb-type domain maps to 654–714 (KPETFNQLWT…RVQKYFIKLT (61 aa)). A DNA-binding region (H-T-H motif) is located at residues 687–710 (WQKIADELGNRTAKQVASRVQKYF). Position 708 is an N6-acetyllysine (K708). Residue K715 forms a Glycyl lysine isopeptide (Lys-Gly) (interchain with G-Cter in SUMO2) linkage. The ZZ-type zinc finger occupies 825-884 (HVGFKCDNCGVEPIQGVRWHCQDCPPEMSLDFCDSCSDCPHETDIHKEDHQLEPVYKSET). C830, C833, C845, C848, C857, C860, H870, and H874 together coordinate Zn(2+).

In terms of assembly, component of the ADA2A-containing complex (ATAC), composed of KAT14, KAT2A, TADA2L, TADA3L, ZZ3, MBIP, WDR5, YEATS2, CCDC101 and DR1. Interacts via (ZZ-type zinc finger) with histone H3 in a methylation-independent manner and acetylation on 'Lys-4' (H3K4ac) moderately enhances the interaction.

It is found in the nucleus. In terms of biological role, histone H3 reader that is required for the ATAC complex-mediated maintenance of histone acetylation and gene activation. Component of the ATAC complex, a complex with histone acetyltransferase activity on histones H3 and H4. This is ZZ-type zinc finger-containing protein 3 (Zzz3) from Mus musculus (Mouse).